The primary structure comprises 271 residues: 3-methyl-2-oxobutanoate hydroxymethyltransferase (271 aa).

Mg(2+) is bound by residues Asp-42 and Asp-86. 3-methyl-2-oxobutanoate-binding positions include 42 to 43 (DS), Asp-86, and Lys-116. Glu-118 is a binding site for Mg(2+). Glu-185 acts as the Proton acceptor in catalysis.

Belongs to the PanB family. In terms of assembly, homodecamer; pentamer of dimers. It depends on Mg(2+) as a cofactor.

It localises to the cytoplasm. The enzyme catalyses 3-methyl-2-oxobutanoate + (6R)-5,10-methylene-5,6,7,8-tetrahydrofolate + H2O = 2-dehydropantoate + (6S)-5,6,7,8-tetrahydrofolate. Its pathway is cofactor biosynthesis; (R)-pantothenate biosynthesis; (R)-pantoate from 3-methyl-2-oxobutanoate: step 1/2. Catalyzes the reversible reaction in which hydroxymethyl group from 5,10-methylenetetrahydrofolate is transferred onto alpha-ketoisovalerate to form ketopantoate. The chain is 3-methyl-2-oxobutanoate hydroxymethyltransferase from Synechococcus sp. (strain CC9605).